Here is a 456-residue protein sequence, read N- to C-terminus: Bifunctional protein GlmU (456 aa).

The interval 1–229 is pyrophosphorylase; sequence MYKCALILAA…FEEILGVNSR (229 aa). UDP-N-acetyl-alpha-D-glucosamine contacts are provided by residues 8-11, K22, Q73, and 78-79; these read LAAG and GT. Residue D103 participates in Mg(2+) binding. UDP-N-acetyl-alpha-D-glucosamine contacts are provided by G140, E155, N170, and N227. N227 contributes to the Mg(2+) binding site. The linker stretch occupies residues 230 to 250; sequence LQLCQVGKVMQKRINEKHMEN. The tract at residues 251 to 456 is N-acetyltransferase; the sequence is GSTLIDPDNT…GWVDKKGLLK (206 aa). Residues R332 and K350 each contribute to the UDP-N-acetyl-alpha-D-glucosamine site. H362 (proton acceptor) is an active-site residue. Y365 and N376 together coordinate UDP-N-acetyl-alpha-D-glucosamine. Acetyl-CoA contacts are provided by residues 385-386, A422, and R439; that span reads NY.

The protein in the N-terminal section; belongs to the N-acetylglucosamine-1-phosphate uridyltransferase family. This sequence in the C-terminal section; belongs to the transferase hexapeptide repeat family. Homotrimer. Requires Mg(2+) as cofactor.

Its subcellular location is the cytoplasm. The enzyme catalyses alpha-D-glucosamine 1-phosphate + acetyl-CoA = N-acetyl-alpha-D-glucosamine 1-phosphate + CoA + H(+). It carries out the reaction N-acetyl-alpha-D-glucosamine 1-phosphate + UTP + H(+) = UDP-N-acetyl-alpha-D-glucosamine + diphosphate. It participates in nucleotide-sugar biosynthesis; UDP-N-acetyl-alpha-D-glucosamine biosynthesis; N-acetyl-alpha-D-glucosamine 1-phosphate from alpha-D-glucosamine 6-phosphate (route II): step 2/2. It functions in the pathway nucleotide-sugar biosynthesis; UDP-N-acetyl-alpha-D-glucosamine biosynthesis; UDP-N-acetyl-alpha-D-glucosamine from N-acetyl-alpha-D-glucosamine 1-phosphate: step 1/1. Its pathway is bacterial outer membrane biogenesis; LPS lipid A biosynthesis. In terms of biological role, catalyzes the last two sequential reactions in the de novo biosynthetic pathway for UDP-N-acetylglucosamine (UDP-GlcNAc). The C-terminal domain catalyzes the transfer of acetyl group from acetyl coenzyme A to glucosamine-1-phosphate (GlcN-1-P) to produce N-acetylglucosamine-1-phosphate (GlcNAc-1-P), which is converted into UDP-GlcNAc by the transfer of uridine 5-monophosphate (from uridine 5-triphosphate), a reaction catalyzed by the N-terminal domain. The chain is Bifunctional protein GlmU from Clostridium acetobutylicum (strain ATCC 824 / DSM 792 / JCM 1419 / IAM 19013 / LMG 5710 / NBRC 13948 / NRRL B-527 / VKM B-1787 / 2291 / W).